A 165-amino-acid chain; its full sequence is 2-halobenzoate 1,2-dioxygenase small subunit (165 aa).

Belongs to the bacterial ring-hydroxylating dioxygenase beta subunit family. In terms of assembly, heterohexamer of 3 large (CbdA) subunits and 3 small (CbdB) subunits. The heterohexamer is part of 2-halobenzoate dioxygenase two component enzyme system. The other component is a NADH:acceptor reductase (CdbC).

It carries out the reaction a 2-halobenzoate + NADH + O2 + H(+) = a halide anion + catechol + CO2 + NAD(+). The protein operates within xenobiotic degradation; benzoate degradation via CoA ligation. In terms of biological role, component of 2-halobenzoate dioxygenase multicomponent enzyme system which catalyzes the incorporation of both atoms of molecular oxygen into 2-halobenzoate to form catechol. The polypeptide is 2-halobenzoate 1,2-dioxygenase small subunit (cbdB) (Burkholderia cepacia (Pseudomonas cepacia)).